The primary structure comprises 158 residues: Transcription elongation factor GreB (158 aa).

The stretch at 53–75 (KRRLREIDRRVRFLTKRLEVLQI) forms a coiled coil.

The protein belongs to the GreA/GreB family. GreB subfamily.

Its function is as follows. Necessary for efficient RNA polymerase transcription elongation past template-encoded arresting sites. The arresting sites in DNA have the property of trapping a certain fraction of elongating RNA polymerases that pass through, resulting in locked ternary complexes. Cleavage of the nascent transcript by cleavage factors such as GreA or GreB allows the resumption of elongation from the new 3'terminus. GreB releases sequences of up to 9 nucleotides in length. This chain is Transcription elongation factor GreB, found in Pasteurella multocida (strain Pm70).